A 503-amino-acid chain; its full sequence is Portal protein (503 aa).

Residues 463–503 (EMNQYAEMQGNLLDDEGGDDDLEEDDPNAGAAESGGAGQVS) are disordered. Residues 475–489 (LDDEGGDDDLEEDDP) are compositionally biased toward acidic residues.

It belongs to the SPP1-like portal protein family. Homododecamer. Has been seen as 13-mer and 14-mer multimer in experiments, but assembles as homododecamer in vivo. Interacts with the gp7 protein. Interacts with the connector proteins gp15; this interaction occurs at the end of the packaging when the terminase complex is replaced by the connector.

The protein resides in the virion. Forms the portal vertex of the capsid. This portal plays critical roles in head assembly, genome packaging, neck/tail attachment, and genome ejection. The portal protein multimerizes as a single ring-shaped homododecamer arranged around a central channel. Binds to the terminase subunits to form the packaging machine. Necessary to ensure correct procapsid size during capsid assembly. Once the capsid is packaged with the DNA, the terminase complex is substituted by the connector proteins gp15. In Bacillus phage SPP1 (Bacteriophage SPP1), this protein is Portal protein (6).